A 1653-amino-acid polypeptide reads, in one-letter code: Protein TOPAZ1 (1653 aa).

3 disordered regions span residues 1–94, 284–303, and 415–442; these read MRPP…TDLV, YSVE…KSGK, and ISST…SETE. The segment covering 63–78 has biased composition (basic and acidic residues); sequence GREETEGDKLAKENGK. A compositionally biased stretch (basic and acidic residues) spans 423-442; it reads SDGHHMEKRSPRGDLRSETE.

As to expression, restricted to testis, where it localizes to germ cells.

The protein localises to the cytoplasm. The protein resides in the cytosol. Important for normal spermatogenesis and male fertility. Specifically required for progression to the post-meiotic stages of spermatocyte development. Seems to be necessary for normal expression levels of a number of testis-expressed gene transcripts, although its role in this process is unclear. This Mus musculus (Mouse) protein is Protein TOPAZ1.